Reading from the N-terminus, the 543-residue chain is Chaperonin GroEL (543 aa).

Residues 29 to 32, Lys50, 86 to 90, Gly415, and Asp495 contribute to the ATP site; these read TLGP and DGTTT.

The protein belongs to the chaperonin (HSP60) family. Forms a cylinder of 14 subunits composed of two heptameric rings stacked back-to-back. Interacts with the co-chaperonin GroES.

It localises to the cytoplasm. It carries out the reaction ATP + H2O + a folded polypeptide = ADP + phosphate + an unfolded polypeptide.. Its function is as follows. Together with its co-chaperonin GroES, plays an essential role in assisting protein folding. The GroEL-GroES system forms a nano-cage that allows encapsulation of the non-native substrate proteins and provides a physical environment optimized to promote and accelerate protein folding. The protein is Chaperonin GroEL of Karelsulcia muelleri (strain GWSS) (Sulcia muelleri).